The primary structure comprises 364 residues: Large ribosomal subunit protein bL27m (364 aa).

A mitochondrion-targeting transit peptide spans 1-19 (MFSSSWQQVPKFVVQQVRT).

Belongs to the bacterial ribosomal protein bL27 family.

The protein localises to the mitochondrion. Component of the large subunit of mitochondrial ribosome. The chain is Large ribosomal subunit protein bL27m (MRPL2) from Kluyveromyces lactis (strain ATCC 8585 / CBS 2359 / DSM 70799 / NBRC 1267 / NRRL Y-1140 / WM37) (Yeast).